The primary structure comprises 327 residues: Zinc transport protein ZntB (327 aa).

The Cytoplasmic portion of the chain corresponds to 1-271 (MDVVEGKALQ…AMNRRTYTMS (271 aa)). A helical membrane pass occupies residues 272 to 292 (LLAMVFLPTTFLTGLFGVNLG). Over 293-300 (GIPGNTDA) the chain is Periplasmic. The helical transmembrane segment at 301–321 (FGFTIFCMMLVVLVLSVAWWL) threads the bilayer. Residues 322–327 (KRSKWL) are Cytoplasmic-facing.

The protein belongs to the CorA metal ion transporter (MIT) (TC 1.A.35) family.

The protein localises to the cell inner membrane. The enzyme catalyses Zn(2+)(out) + H(+)(out) = Zn(2+)(in) + H(+)(in). Functionally, zinc transporter. Acts as a Zn(2+):proton symporter, which likely mediates zinc ion uptake. This Yersinia pseudotuberculosis serotype O:1b (strain IP 31758) protein is Zinc transport protein ZntB.